A 367-amino-acid polypeptide reads, in one-letter code: Phosphoribosylaminoimidazole-succinocarboxamide synthase (367 aa).

Belongs to the SAICAR synthetase family.

It carries out the reaction 5-amino-1-(5-phospho-D-ribosyl)imidazole-4-carboxylate + L-aspartate + ATP = (2S)-2-[5-amino-1-(5-phospho-beta-D-ribosyl)imidazole-4-carboxamido]succinate + ADP + phosphate + 2 H(+). The protein operates within purine metabolism; IMP biosynthesis via de novo pathway; 5-amino-1-(5-phospho-D-ribosyl)imidazole-4-carboxamide from 5-amino-1-(5-phospho-D-ribosyl)imidazole-4-carboxylate: step 1/2. The polypeptide is Phosphoribosylaminoimidazole-succinocarboxamide synthase (Psychromonas ingrahamii (strain DSM 17664 / CCUG 51855 / 37)).